Reading from the N-terminus, the 156-residue chain is ATP synthase subunit b (156 aa).

Residues 11 to 31 (AIAFFIFVVFCMKYVWPPLMA) traverse the membrane as a helical segment.

The protein belongs to the ATPase B chain family. In terms of assembly, F-type ATPases have 2 components, F(1) - the catalytic core - and F(0) - the membrane proton channel. F(1) has five subunits: alpha(3), beta(3), gamma(1), delta(1), epsilon(1). F(0) has three main subunits: a(1), b(2) and c(10-14). The alpha and beta chains form an alternating ring which encloses part of the gamma chain. F(1) is attached to F(0) by a central stalk formed by the gamma and epsilon chains, while a peripheral stalk is formed by the delta and b chains.

Its subcellular location is the cell inner membrane. Functionally, f(1)F(0) ATP synthase produces ATP from ADP in the presence of a proton or sodium gradient. F-type ATPases consist of two structural domains, F(1) containing the extramembraneous catalytic core and F(0) containing the membrane proton channel, linked together by a central stalk and a peripheral stalk. During catalysis, ATP synthesis in the catalytic domain of F(1) is coupled via a rotary mechanism of the central stalk subunits to proton translocation. Its function is as follows. Component of the F(0) channel, it forms part of the peripheral stalk, linking F(1) to F(0). This Aeromonas hydrophila subsp. hydrophila (strain ATCC 7966 / DSM 30187 / BCRC 13018 / CCUG 14551 / JCM 1027 / KCTC 2358 / NCIMB 9240 / NCTC 8049) protein is ATP synthase subunit b.